A 624-amino-acid chain; its full sequence is Probable potassium transport system protein Kup 2 (624 aa).

The next 12 membrane-spanning stretches (helical) occupy residues Leu-14–Phe-34, Ile-51–Val-71, Gly-97–Leu-117, Leu-133–Phe-153, Ile-163–Phe-183, Ser-211–Ala-231, Trp-245–Leu-265, Phe-283–Ile-303, Val-335–Phe-355, Ala-364–Ala-384, Phe-393–Ile-413, and Leu-416–Thr-436.

Belongs to the HAK/KUP transporter (TC 2.A.72) family.

Its subcellular location is the cell inner membrane. It carries out the reaction K(+)(in) + H(+)(in) = K(+)(out) + H(+)(out). In terms of biological role, transport of potassium into the cell. Likely operates as a K(+):H(+) symporter. The chain is Probable potassium transport system protein Kup 2 from Legionella pneumophila (strain Lens).